We begin with the raw amino-acid sequence, 329 residues long: Peroxidase 18 (329 aa).

Positions 1–29 (MALQFFSCKPKYTFLSSLLLLLLLSSSVA) are cleaved as a signal peptide. 4 disulfides stabilise this stretch: cysteine 40/cysteine 116, cysteine 73/cysteine 78, cysteine 122/cysteine 325, and cysteine 201/cysteine 235. Histidine 71 acts as the Proton acceptor in catalysis. 5 residues coordinate Ca(2+): aspartate 72, valine 75, glycine 77, aspartate 79, and serine 81. Asparagine 87 carries an N-linked (GlcNAc...) asparagine glycan. Isoleucine 164 serves as a coordination point for substrate. Position 194 (histidine 194) interacts with heme b. Threonine 195 lines the Ca(2+) pocket. Ca(2+) is bound by residues aspartate 249, threonine 252, and aspartate 257.

This sequence belongs to the peroxidase family. Classical plant (class III) peroxidase subfamily. The cofactor is heme b. Requires Ca(2+) as cofactor.

It localises to the secreted. The catalysed reaction is 2 a phenolic donor + H2O2 = 2 a phenolic radical donor + 2 H2O. Its function is as follows. Removal of H(2)O(2), oxidation of toxic reductants, biosynthesis and degradation of lignin, suberization, auxin catabolism, response to environmental stresses such as wounding, pathogen attack and oxidative stress. These functions might be dependent on each isozyme/isoform in each plant tissue. This is Peroxidase 18 (PER18) from Arabidopsis thaliana (Mouse-ear cress).